Here is a 500-residue protein sequence, read N- to C-terminus: Protein shisa-6 (500 aa).

The signal sequence occupies residues 1 to 25; sequence MALRRLLLLLLLSLESLDLLPSVHG. Topologically, residues 26–174 are extracellular; that stretch reads ARGRAANRTL…NKYDPEKDKT (149 aa). Residues Asn-32 and Asn-59 are each glycosylated (N-linked (GlcNAc...) asparagine). The segment at 52–73 is disordered; the sequence is ARGGRELNGTARAPGIPEAGSR. Residues 175–195 form a helical membrane-spanning segment; that stretch reads NFTVYITCGVIAFVIVAGVFA. Residues 196-500 lie on the Cytoplasmic side of the membrane; that stretch reads KVSYDKAHRP…YTASKTEVTV (305 aa). A compositionally biased stretch (polar residues) spans 240-255; that stretch reads TSPKENTPVRSSSKNH. Disordered stretches follow at residues 240–269 and 349–378; these read TSPK…PEKP and SQQK…DRGL. Residues Ser-391, Ser-397, and Ser-409 each carry the phosphoserine modification. Thr-433 carries the post-translational modification Phosphothreonine. Residues 444 to 470 are disordered; it reads MHSHPSASNNSYATLGQSQTAAKRHAF. The segment covering 448-464 has biased composition (polar residues); that stretch reads PSASNNSYATLGQSQTA. A Phosphothreonine modification is found at Thr-477. The PDZ-binding motif lies at 497–500; it reads EVTV.

It belongs to the shisa family. As to quaternary structure, component of the postsynaptic hippocampal AMPA-type glutamate receptor (AMPAR) complex, at least composed of pore forming AMPAR subunits GRIA1, GRIA2 and GRIA3 and AMPAR auxiliary proteins SHISA6 and SHISA7. Interacts (via PDZ-binding motif) with DLG4/PSD-95 (via PDZ domain); the interaction is direct. Expressed in the developing ventral mesencephalon.

Its subcellular location is the membrane. The protein localises to the postsynaptic density. Functionally, involved in maintenance of high-frequency synaptic transmission at hippocampal CA3-CA1 synapses. Regulates AMPA-type glutamate receptor (AMPAR) immobilization at postsynaptic density keeping the channels in an activated state in the presence of glutamate and preventing synaptic depression. May play a role in self-renewal and differentiation of spermatogonial stem cells by inhibiting canonical Wnt signaling pathway. The polypeptide is Protein shisa-6 (Homo sapiens (Human)).